The chain runs to 312 residues: Olfactory receptor 2J2 (312 aa).

At 1-26 (MMIKKNASSEDFFILLGFSNWPQLEV) the chain is on the extracellular side. A glycan (N-linked (GlcNAc...) asparagine) is linked at Asn6. A helical membrane pass occupies residues 27–50 (VLFVVILIFYLMTLTGNLFIIILS). At 51 to 58 (YVDSHLHT) the chain is on the cytoplasmic side. The helical transmembrane segment at 59 to 80 (PMYFFLSNLSFLDLCHTTSSIP) threads the bilayer. The Extracellular segment spans residues 81–101 (QLLVNLRGPEKTISYAGCMVQ). Residues Cys98 and Cys190 are joined by a disulfide bond. Residues 102-121 (LYFVLALGIAECVLLVVMSY) form a helical membrane-spanning segment. Residues 122 to 140 (DRYVAVCRPLHYTVLMHPR) are Cytoplasmic-facing. A helical transmembrane segment spans residues 141–159 (FCHLLAAASWVIGFTISAL). Residues 160-196 (HSSFTFWVPLCGHRLVDHFFCEVPALLRLSCVDTHAN) are Extracellular-facing. The chain crosses the membrane as a helical span at residues 197–220 (ELTLMVMSSIFVLIPLILILTAYG). Residues 221–237 (AIARAVLSMQSTTGLQK) are Cytoplasmic-facing. The chain crosses the membrane as a helical span at residues 238–260 (VFRTCGAHLMVVSLFFIPVMCMY). Residues 261–273 (LQPPSENSPDQGK) lie on the Extracellular side of the membrane. A helical transmembrane segment spans residues 274-293 (FIALFYTVVTPSLNPLIYTL). At 294-312 (RNKHVKGAAKRLLGWEWGK) the chain is on the cytoplasmic side.

The protein belongs to the G-protein coupled receptor 1 family.

The protein localises to the cell membrane. Functionally, odorant receptor. The sequence is that of Olfactory receptor 2J2 (OR2J2) from Homo sapiens (Human).